Reading from the N-terminus, the 912-residue chain is DNA (cytosine-5)-methyltransferase 3A (912 aa).

2 disordered regions span residues 1 to 178 (MPAM…GWES) and 221 to 286 (IAGM…EYED). Positions 17-40 (AEREEDRKDGEEQEEPRGKEERQE) are enriched in basic and acidic residues. Over residues 47–57 (KVGRPGRKRKH) the composition is skewed to basic residues. Polar residues predominate over residues 74–83 (KSPSMAQDSG). Phosphoserine is present on Ser105. Positions 113-128 (GAPAEGEGAAETLPEA) are enriched in low complexity. Thr124 carries the phosphothreonine modification. Basic and acidic residues predominate over residues 149-167 (AGKEQKETNIESMKMEGSR). Residue Lys162 forms a Glycyl lysine isopeptide (Lys-Gly) (interchain with G-Cter in SUMO2) linkage. Position 171 is an omega-N-methylarginine (Arg171). The segment at 199–403 (SKRKRDEWLA…DTAKAVEVQN (205 aa)) is interaction with DNMT1 and DNMT3B. Phosphoserine occurs at positions 243 and 255. Polar residues predominate over residues 246-260 (AVQQPTDPASPTVAT). A Phosphothreonine modification is found at Thr261. Position 267 is a phosphoserine (Ser267). Over residues 269 to 279 (AGDKNATKAGD) the composition is skewed to basic and acidic residues. Residues 292–350 (IGELVWGKLRGFSWWPGRIVSWWMTGRSRAAEGTRWVMWFGDGKFSVVCVEKLMPLSSF) form the PWWP domain. Residues Ser390 and Ser393 each carry the phosphoserine modification. A disordered region spans residues 447 to 466 (AYAPPPPAKKPRKSTAEKPK). In terms of domain architecture, ADD spans 482–614 (EVRQKCRNIE…LQMFFANNHD (133 aa)). A GATA-type; atypical zinc finger spans residues 493–523 (ICISCGSLNVTLEHPLFVGGMCQNCKNCFLE). Residues 494 to 586 (CISCGSLNVT…KEDPWNCYMC (93 aa)) form an interaction with the PRC2/EED-EZH2 complex region. A PHD-type; atypical zinc finger spans residues 534–590 (QSYCTICCGGREVLMCGNNNCCRCFCVECVDLLVGPGAAQAAIKEDPWNCYMCGHKG). Residues 634 to 912 (IRVLSLFDGI…APLKEYFACV (279 aa)) form the SAM-dependent MTase C5-type domain. S-adenosyl-L-methionine contacts are provided by residues 641 to 645 (DGIAT), Glu664, and 686 to 688 (DVR). Cys710 is an active-site residue. Residue Cys710 is modified to S-methylcysteine; by autocatalysis. Position 891 to 893 (891 to 893 (RSW)) interacts with S-adenosyl-L-methionine.

Belongs to the class I-like SAM-binding methyltransferase superfamily. C5-methyltransferase family. In terms of assembly, heterotetramer composed of 1 DNMT3A homodimer and 2 DNMT3L subunits (DNMT3L-DNMT3A-DNMT3A-DNMT3L). Interacts with UBC9, PIAS1 and PIAS2. Binds the ZBTB18 transcriptional repressor. Interacts with SETDB1. Associates with HDAC1 through its ADD domain. Interacts with UHRF1. Interacts with DNMT1 and DNMT3B. Interacts with the PRC2/EED-EZH2 complex. Interacts with MPHOSPH8. Interacts with histone H3 that is not methylated at 'Lys-4' (H3K4). Interacts with SPOCD1. Interacts with ZNF263; recruited to the SIX3 promoter along with other proteins involved in chromatin modification and transcriptional corepression where it contributes to transcriptional repression. Sumoylated; sumoylation disrupts the ability to interact with histone deacetylases (HDAC1 and HDAC2) and repress transcription. In terms of processing, auto-methylated at Cys-710: auto-methylation takes place in absence of DNA substrate and inactivates the DNA methyltransferase activity. Inactivation by auto-methylation may be used to inactivate unused DNA methyltransferases in the cell. As to expression, highly expressed in fetal tissues, skeletal muscle, heart, peripheral blood mononuclear cells, kidney, and at lower levels in placenta, brain, liver, colon, spleen, small intestine and lung.

It localises to the nucleus. It is found in the chromosome. The protein localises to the cytoplasm. It carries out the reaction a 2'-deoxycytidine in DNA + S-adenosyl-L-methionine = a 5-methyl-2'-deoxycytidine in DNA + S-adenosyl-L-homocysteine + H(+). The catalysed reaction is L-cysteinyl-[protein] + S-adenosyl-L-methionine = S-methyl-L-cysteinyl-[protein] + S-adenosyl-L-homocysteine + H(+). Its activity is regulated as follows. Activated by binding to the regulatory factor DNMT3L. Auto-methylation at Cys-710 in absence of DNA inactivates the DNA methyltransferase activity. In terms of biological role, required for genome-wide de novo methylation and is essential for the establishment of DNA methylation patterns during development. DNA methylation is coordinated with methylation of histones. It modifies DNA in a non-processive manner and also methylates non-CpG sites. May preferentially methylate DNA linker between 2 nucleosomal cores and is inhibited by histone H1. Plays a role in paternal and maternal imprinting. Required for methylation of most imprinted loci in germ cells. Acts as a transcriptional corepressor for ZBTB18. Recruited to trimethylated 'Lys-36' of histone H3 (H3K36me3) sites. Can actively repress transcription through the recruitment of HDAC activity. Also has weak auto-methylation activity on Cys-710 in absence of DNA. This Homo sapiens (Human) protein is DNA (cytosine-5)-methyltransferase 3A (DNMT3A).